Reading from the N-terminus, the 200-residue chain is MTEKAPEPHVEEDDDELDGKLNYKPPPQKSLKELQEMDKDDESLTKYKKTLLGDGPVVADPTAPNVTVTRLTLVCESAPGPITMDLTGDLEALKKETFVLKEGVEYRVKINFKVNKDIVSGLKYVQHTYRTGVKVDKATFMVGSYGPRPEEYEFLTPIEEAPKGMLARGTYHNKSFFTDDDKHDHLTWEWNLSIKKDWTE.

The disordered stretch occupies residues 1–40 (MTEKAPEPHVEEDDDELDGKLNYKPPPQKSLKELQEMDKD). Residue Thr-2 is modified to N-acetylthreonine. Lys-20 is subject to N6-acetyllysine. Tyr-23 is subject to Phosphotyrosine. N6-acetyllysine is present on residues Lys-24, Lys-39, Lys-46, Lys-101, and Lys-123. The segment covering 30–40 (SLKELQEMDKD) has biased composition (basic and acidic residues). Ser-144 carries the post-translational modification Phosphoserine. Position 174 is an N6-acetyllysine (Lys-174).

Belongs to the Rho GDI family. Interacts with RHOA. Interacts with RAC1. Interacts with RAC2. Interacts with CDC42.

It is found in the cytoplasm. Its subcellular location is the cytosol. Regulates the GDP/GTP exchange reaction of the Rho proteins by inhibiting the dissociation of GDP from them, and the subsequent binding of GTP to them. Regulates reorganization of the actin cytoskeleton mediated by Rho family members. This chain is Rho GDP-dissociation inhibitor 2 (ARHGDIB), found in Bos taurus (Bovine).